Reading from the N-terminus, the 301-residue chain is Probable alpha-L-glutamate ligase (301 aa).

Residues 104–287 (LQLLSRRGVG…VAGLIIQYLE (184 aa)) form the ATP-grasp domain. Residues Lys141, 178–179 (EY), Asp187, and 211–213 (RSN) each bind ATP. Mg(2+)-binding residues include Asp248, Glu260, and Asn262. Asp248, Glu260, and Asn262 together coordinate Mn(2+).

Belongs to the RimK family. Requires Mg(2+) as cofactor. It depends on Mn(2+) as a cofactor.

This Stutzerimonas stutzeri (strain A1501) (Pseudomonas stutzeri) protein is Probable alpha-L-glutamate ligase.